The sequence spans 367 residues: Peptide chain release factor 2 (367 aa).

Q254 carries the post-translational modification N5-methylglutamine.

Belongs to the prokaryotic/mitochondrial release factor family. In terms of processing, methylated by PrmC. Methylation increases the termination efficiency of RF2.

It is found in the cytoplasm. Peptide chain release factor 2 directs the termination of translation in response to the peptide chain termination codons UGA and UAA. In Neisseria meningitidis serogroup A / serotype 4A (strain DSM 15465 / Z2491), this protein is Peptide chain release factor 2.